We begin with the raw amino-acid sequence, 500 residues long: Lysine--tRNA ligase (500 aa).

The Mg(2+) site is built by glutamate 409 and glutamate 416.

The protein belongs to the class-II aminoacyl-tRNA synthetase family. As to quaternary structure, homodimer. The cofactor is Mg(2+).

It localises to the cytoplasm. It carries out the reaction tRNA(Lys) + L-lysine + ATP = L-lysyl-tRNA(Lys) + AMP + diphosphate. This is Lysine--tRNA ligase from Lysinibacillus sphaericus (strain C3-41).